A 528-amino-acid chain; its full sequence is Membrane protein insertase YidC (528 aa).

The next 5 membrane-spanning stretches (helical) occupy residues 13-33 (ILLA…FFIP), 336-356 (WGWA…PLTY), 406-426 (LPIL…LNAI), 446-466 (YFIL…ITPM), and 481-501 (PVIF…YWFV).

Belongs to the OXA1/ALB3/YidC family. Type 1 subfamily. Interacts with the Sec translocase complex via SecD. Specifically interacts with transmembrane segments of nascent integral membrane proteins during membrane integration.

The protein resides in the cell inner membrane. Functionally, required for the insertion and/or proper folding and/or complex formation of integral membrane proteins into the membrane. Involved in integration of membrane proteins that insert both dependently and independently of the Sec translocase complex, as well as at least some lipoproteins. Aids folding of multispanning membrane proteins. The protein is Membrane protein insertase YidC of Campylobacter jejuni subsp. jejuni serotype O:2 (strain ATCC 700819 / NCTC 11168).